Consider the following 371-residue polypeptide: Aminomethyltransferase (371 aa).

It belongs to the GcvT family. In terms of assembly, the glycine cleavage system is composed of four proteins: P, T, L and H.

The enzyme catalyses N(6)-[(R)-S(8)-aminomethyldihydrolipoyl]-L-lysyl-[protein] + (6S)-5,6,7,8-tetrahydrofolate = N(6)-[(R)-dihydrolipoyl]-L-lysyl-[protein] + (6R)-5,10-methylene-5,6,7,8-tetrahydrofolate + NH4(+). Its function is as follows. The glycine cleavage system catalyzes the degradation of glycine. The chain is Aminomethyltransferase from Oceanobacillus iheyensis (strain DSM 14371 / CIP 107618 / JCM 11309 / KCTC 3954 / HTE831).